The following is a 188-amino-acid chain: Probable nicotinate-nucleotide adenylyltransferase (188 aa).

It belongs to the NadD family.

It carries out the reaction nicotinate beta-D-ribonucleotide + ATP + H(+) = deamido-NAD(+) + diphosphate. It functions in the pathway cofactor biosynthesis; NAD(+) biosynthesis; deamido-NAD(+) from nicotinate D-ribonucleotide: step 1/1. Its function is as follows. Catalyzes the reversible adenylation of nicotinate mononucleotide (NaMN) to nicotinic acid adenine dinucleotide (NaAD). The sequence is that of Probable nicotinate-nucleotide adenylyltransferase from Listeria welshimeri serovar 6b (strain ATCC 35897 / DSM 20650 / CCUG 15529 / CIP 8149 / NCTC 11857 / SLCC 5334 / V8).